A 425-amino-acid polypeptide reads, in one-letter code: Serine--tRNA ligase (425 aa).

Residue 230–232 coordinates L-serine; the sequence is TAE. Residue 261–263 coordinates ATP; it reads RSE. Glutamate 284 contributes to the L-serine binding site. ATP is bound at residue 348-351; it reads EISS. Serine 384 serves as a coordination point for L-serine.

Belongs to the class-II aminoacyl-tRNA synthetase family. Type-1 seryl-tRNA synthetase subfamily. Homodimer. The tRNA molecule binds across the dimer.

It localises to the cytoplasm. It carries out the reaction tRNA(Ser) + L-serine + ATP = L-seryl-tRNA(Ser) + AMP + diphosphate + H(+). The enzyme catalyses tRNA(Sec) + L-serine + ATP = L-seryl-tRNA(Sec) + AMP + diphosphate + H(+). Its pathway is aminoacyl-tRNA biosynthesis; selenocysteinyl-tRNA(Sec) biosynthesis; L-seryl-tRNA(Sec) from L-serine and tRNA(Sec): step 1/1. Its function is as follows. Catalyzes the attachment of serine to tRNA(Ser). Is also able to aminoacylate tRNA(Sec) with serine, to form the misacylated tRNA L-seryl-tRNA(Sec), which will be further converted into selenocysteinyl-tRNA(Sec). The chain is Serine--tRNA ligase from Streptococcus agalactiae serotype Ia (strain ATCC 27591 / A909 / CDC SS700).